The sequence spans 55 residues: Putative virulence-regulating protein PA2146 (55 aa).

The interval 1 to 55 is disordered; that stretch reads MAQHQGGKGNFAEDPKRASEAGKKGGQASGGNFKNDPQRASEAGKKGGQRSHGGN. Basic and acidic residues-rich tracts occupy residues 11–23 and 36–45; these read FAEDPKRASEAGK and DPQRASEAGK.

This sequence belongs to the con-10 family.

May be involved in the regulation of the production of pyocyanine, one of the major virulence factors secreted by P.aeruginosa, and other virulence factors. This is Putative virulence-regulating protein PA2146 from Pseudomonas aeruginosa (strain ATCC 15692 / DSM 22644 / CIP 104116 / JCM 14847 / LMG 12228 / 1C / PRS 101 / PAO1).